Here is a 1362-residue protein sequence, read N- to C-terminus: DNA-directed RNA polymerase subunit beta (1362 aa).

The protein belongs to the RNA polymerase beta chain family. In terms of assembly, the RNAP catalytic core consists of 2 alpha, 1 beta, 1 beta' and 1 omega subunit. When a sigma factor is associated with the core the holoenzyme is formed, which can initiate transcription.

The enzyme catalyses RNA(n) + a ribonucleoside 5'-triphosphate = RNA(n+1) + diphosphate. In terms of biological role, DNA-dependent RNA polymerase catalyzes the transcription of DNA into RNA using the four ribonucleoside triphosphates as substrates. This Acidithiobacillus ferrooxidans (strain ATCC 23270 / DSM 14882 / CIP 104768 / NCIMB 8455) (Ferrobacillus ferrooxidans (strain ATCC 23270)) protein is DNA-directed RNA polymerase subunit beta.